Reading from the N-terminus, the 504-residue chain is Catalase (504 aa).

A disordered region spans residues 1–25 (MSKQDGKLTGLFGAPVSDRENSMTA). Residues histidine 56 and asparagine 129 contribute to the active site. Residue tyrosine 339 participates in heme binding.

The protein belongs to the catalase family. Homodimer. Heme serves as cofactor.

The catalysed reaction is 2 H2O2 = O2 + 2 H2O. Functionally, decomposes hydrogen peroxide into water and oxygen; serves to protect cells from the toxic effects of hydrogen peroxide. This Staphylococcus epidermidis (strain ATCC 35984 / DSM 28319 / BCRC 17069 / CCUG 31568 / BM 3577 / RP62A) protein is Catalase (katA).